We begin with the raw amino-acid sequence, 597 residues long: Elongation factor 4 (597 aa).

Residues Q2–K184 enclose the tr-type G domain. GTP-binding positions include D14–T19 and N131–D134.

The protein belongs to the TRAFAC class translation factor GTPase superfamily. Classic translation factor GTPase family. LepA subfamily.

It is found in the cell inner membrane. The enzyme catalyses GTP + H2O = GDP + phosphate + H(+). In terms of biological role, required for accurate and efficient protein synthesis under certain stress conditions. May act as a fidelity factor of the translation reaction, by catalyzing a one-codon backward translocation of tRNAs on improperly translocated ribosomes. Back-translocation proceeds from a post-translocation (POST) complex to a pre-translocation (PRE) complex, thus giving elongation factor G a second chance to translocate the tRNAs correctly. Binds to ribosomes in a GTP-dependent manner. This Bordetella bronchiseptica (strain ATCC BAA-588 / NCTC 13252 / RB50) (Alcaligenes bronchisepticus) protein is Elongation factor 4.